Reading from the N-terminus, the 123-residue chain is Omega-oxotoxin-Ot1a (123 aa).

An N-terminal signal peptide occupies residues M1 to A16. A propeptide spanning residues T17–R54 is cleaved from the precursor. The Oxytoxin-type inhibitor cystine knot (ICK) domain occupies D55–K122. 5 cysteine pairs are disulfide-bonded: C58/C72, C65/C77, C69/C118, C71/C106, and C79/C104.

Belongs to the spiderine family. Spiderine subfamily. Post-translationally, mass spectrometry data suggest a carboxylated free C-terminal residue. In terms of tissue distribution, expressed by the venom gland.

The protein localises to the secreted. Functionally, weak blocker of vertebrate P/Q-, N- and L-type voltage-gated calcium channels (Cav1 and Cav2). Is both paralytic and lethal when injected into lepidopteran larvae. Is not toxic to mice. The protein is Omega-oxotoxin-Ot1a of Oxyopes takobius (Lynx spider).